The chain runs to 84 residues: Cysteine-rich protamine (84 aa).

2 cysteine pairs are disulfide-bonded: C16–C24 and C64–C80.

As to quaternary structure, cross-linked by interchain disulfide bonds around the DNA-helix. Testis.

It localises to the nucleus. It is found in the chromosome. In terms of biological role, protamines substitute for histones in the chromatin of sperm during the haploid phase of spermatogenesis. They compact sperm DNA into a highly condensed, stable and inactive complex. This protamine condenses spermiogenic chromatin in a pattern which comprises fibers with a progressively larger diameter and lamellae that finally undergo definitive coalescence. This chain is Cysteine-rich protamine, found in Eledone cirrhosa (Curled octopus).